A 356-amino-acid chain; its full sequence is MKKSDFHYELPEELIAQAPLAERAASRLLVVPPAPAAFGDRQVRDLPELLQPGDLLIFNDTRVIPARLFGQKASGGRVEILIERLLGEREARVQIGASKSPKAGSVIALDAGGQAEVLGRDGEFYLLRFQIPTPLEHWLLEAGRLPLPPYIRREPGVEDRERYQTVFAREVGAVAAPTAGLHFDEPLLARLRERGVEFGHVTLHVGAGTFQPVRVDKLDQHVMHKEWLNVGATLVEQVRRTRARGGRVIAVGTTVVRSLESAWRKTEAAPEGELQPFAGETQIFILPGYRIRSVDAMVTNFHLPESTLMMMVCAFAGRERIFAAYHHAIAQRYRFFSYGDAMLLWGGESGVGNGES.

Belongs to the QueA family. As to quaternary structure, monomer.

The protein resides in the cytoplasm. The enzyme catalyses 7-aminomethyl-7-carbaguanosine(34) in tRNA + S-adenosyl-L-methionine = epoxyqueuosine(34) in tRNA + adenine + L-methionine + 2 H(+). It participates in tRNA modification; tRNA-queuosine biosynthesis. In terms of biological role, transfers and isomerizes the ribose moiety from AdoMet to the 7-aminomethyl group of 7-deazaguanine (preQ1-tRNA) to give epoxyqueuosine (oQ-tRNA). The chain is S-adenosylmethionine:tRNA ribosyltransferase-isomerase from Xanthomonas euvesicatoria pv. vesicatoria (strain 85-10) (Xanthomonas campestris pv. vesicatoria).